The primary structure comprises 101 residues: Putative pterin-4-alpha-carbinolamine dehydratase (101 aa).

Belongs to the pterin-4-alpha-carbinolamine dehydratase family.

The enzyme catalyses (4aS,6R)-4a-hydroxy-L-erythro-5,6,7,8-tetrahydrobiopterin = (6R)-L-erythro-6,7-dihydrobiopterin + H2O. The protein is Putative pterin-4-alpha-carbinolamine dehydratase of Rhizobium etli (strain ATCC 51251 / DSM 11541 / JCM 21823 / NBRC 15573 / CFN 42).